We begin with the raw amino-acid sequence, 214 residues long: ATP phosphoribosyltransferase (214 aa).

This sequence belongs to the ATP phosphoribosyltransferase family. Short subfamily. As to quaternary structure, heteromultimer composed of HisG and HisZ subunits.

It localises to the cytoplasm. It catalyses the reaction 1-(5-phospho-beta-D-ribosyl)-ATP + diphosphate = 5-phospho-alpha-D-ribose 1-diphosphate + ATP. Its pathway is amino-acid biosynthesis; L-histidine biosynthesis; L-histidine from 5-phospho-alpha-D-ribose 1-diphosphate: step 1/9. Functionally, catalyzes the condensation of ATP and 5-phosphoribose 1-diphosphate to form N'-(5'-phosphoribosyl)-ATP (PR-ATP). Has a crucial role in the pathway because the rate of histidine biosynthesis seems to be controlled primarily by regulation of HisG enzymatic activity. The chain is ATP phosphoribosyltransferase (hisG) from Nostoc sp. (strain PCC 7120 / SAG 25.82 / UTEX 2576).